A 240-amino-acid polypeptide reads, in one-letter code: Ribonuclease HII (240 aa).

The 209-residue stretch at 7–215 (RYAIGIDEAG…LKRIAPGWYV (209 aa)) folds into the RNase H type-2 domain. Positions 13, 14, and 112 each coordinate a divalent metal cation.

This sequence belongs to the RNase HII family. Mn(2+) serves as cofactor. The cofactor is Mg(2+).

It is found in the cytoplasm. The catalysed reaction is Endonucleolytic cleavage to 5'-phosphomonoester.. Functionally, endonuclease that specifically degrades the RNA of RNA-DNA hybrids. The protein is Ribonuclease HII of Hyperthermus butylicus (strain DSM 5456 / JCM 9403 / PLM1-5).